The primary structure comprises 736 residues: Orphan sodium- and chloride-dependent neurotransmitter transporter NTT5 (736 aa).

At 1–138 the chain is on the cytoplasmic side; sequence MKTEAQPSTS…FAYLWLNSGG (138 aa). 3 helical membrane passes run 139-159, 177-197, and 199-219; these read CSFAAIYIFMLFLVGVPLLFL, IIAPWIGGVGYSSFMVCFILG, and YFNVVNSWIIFYMSQSFQFPV. At 220-263 the chain is on the extracellular side; that stretch reads PWEKCPLTMNSSGFDPECERTTPSIYFWYQQALKASDRIEDGGS. N-linked (GlcNAc...) asparagine glycosylation is present at asparagine 229. 4 consecutive transmembrane segments (helical) span residues 264-284, 290-310, 338-358, and 383-403; these read PVYSLVLPFFLCWCLVGAFMI, TGKVIYVLVLLPCFIIVGFFI, VWSLAGGQVLSNTGIGLGSVA, and LTLLVFTSFNFCVLGFWATVI. At 404-495 the chain is on the extracellular side; that stretch reads THRCCERNAE…EAMSFLPPSV (92 aa). A run of 5 helical transmembrane segments spans residues 496 to 516, 534 to 554, 568 to 588, 609 to 629, and 659 to 679; these read FWSFIFFLMLLAMGLSSAIGI, HTKLLIVGVFLLMFVCGLFFT, YWIVFPIIVVVVFETMAVSWA, IFGWLWPHLCPVVLLIIFVTM, and ALLLMITLFAIVILPIPAYFV. The Cytoplasmic portion of the chain corresponds to 680 to 736; it reads YCRIHRIPFRPKSGDGPMTASTSLPLSHQLTPSKEVQKEEILQVDETKYPSTCNVTS.

Belongs to the sodium:neurotransmitter symporter (SNF) (TC 2.A.22) family. SLC6A16 subfamily. Highly expressed in peripheral tissues, particularly in testis, pancreas, and prostate.

The protein resides in the membrane. The protein is Orphan sodium- and chloride-dependent neurotransmitter transporter NTT5 (SLC6A16) of Homo sapiens (Human).